The primary structure comprises 275 residues: Large ribosomal subunit protein uL2cz (275 aa).

Disordered regions lie at residues 1 to 20 (MAIHLYKTSTPSTRNGAVDS) and 225 to 275 (NPVD…RRSK).

The protein belongs to the universal ribosomal protein uL2 family. As to quaternary structure, part of the 50S ribosomal subunit.

It is found in the plastid. The protein resides in the chloroplast. This chain is Large ribosomal subunit protein uL2cz (rpl2-A), found in Populus alba (White poplar).